The following is a 446-amino-acid chain: MGVIDNKEQRSLDEINSTIEFNDSQRTSQKFLAFLGPGLLVAVGYMDPGNWITSMQGGAQFGYTLLFVILISSLSAMLLQSMTVRLGIATDKDLAQMTRHYLNKPTAIIFWVIAELAIIATDIAEVIGSAIALDLLFNIPLIIGALITVFDVFLLLFIMKFGFRKIEAIVGTLIFTVLMIFVFEVYISSPNLIEILNGFVPHYQIIANHSILYIALGIIGATIMPHNLYLHSSIVQSRKYNRHSFTEKAQAIKFATIDSNIQLSIAFIVNCLLLVLGAALFYGVNSNNIGGFYDLYQALRTQPVLGVVMGSIMSTLFAIALLASGQNSTITGTLAGQIVMEGFLKLSIPNWMRRLVTRSLAVIPVLLCLVIFRGNESKMEQLLVFSQVFLSIALPFSLIPLQLATSNEKLMGPFKNKKWVNICAWGLIIILSFLNIYLIIETFKEL.

Helical transmembrane passes span 32 to 52 (LAFL…GNWI), 59 to 79 (AQFG…AMLL), 107 to 127 (AIIF…AEVI), 139 to 159 (IPLI…LFIM), 168 to 188 (AIVG…VYIS), 205 to 225 (IIAN…TIMP), 264 to 284 (SIAF…FYGV), 303 to 323 (PVLG…ALLA), 355 to 375 (LVTR…FRGN), 381 to 401 (QLLV…LIPL), and 420 to 440 (VNIC…YLII).

It belongs to the NRAMP family.

It is found in the cell membrane. In terms of biological role, h(+)-stimulated, divalent metal cation uptake system. This is Divalent metal cation transporter MntH from Staphylococcus haemolyticus (strain JCSC1435).